We begin with the raw amino-acid sequence, 427 residues long: 5'-deoxyadenosine deaminase (427 aa).

Residues histidine 62 and histidine 64 each contribute to the Zn(2+) site. Substrate-binding residues include glutamate 91 and histidine 183. A Zn(2+)-binding site is contributed by histidine 210. Substrate contacts are provided by glutamate 213 and aspartate 298. Aspartate 298 contributes to the Zn(2+) binding site.

Belongs to the metallo-dependent hydrolases superfamily. MTA/SAH deaminase family. As to quaternary structure, homotetramer. Requires Zn(2+) as cofactor.

It catalyses the reaction 5'-deoxyadenosine + H2O + H(+) = 5'-deoxyinosine + NH4(+). It carries out the reaction S-adenosyl-L-homocysteine + H2O + H(+) = S-inosyl-L-homocysteine + NH4(+). The catalysed reaction is S-methyl-5'-thioadenosine + H2O + H(+) = S-methyl-5'-thioinosine + NH4(+). The enzyme catalyses adenosine + H2O + H(+) = inosine + NH4(+). The protein operates within amino-acid biosynthesis; S-adenosyl-L-methionine biosynthesis. Catalyzes the deamination of three SAM-derived enzymatic products, namely 5'-deoxyadenosine, S-adenosyl-L-homocysteine, and 5'-methylthioadenosine, to produce the inosine analogs. Can also deaminate adenosine. The preferred substrate for this enzyme is 5'-deoxyadenosine, but all these substrates are efficiently deaminated. Likely functions in a S-adenosyl-L-methionine (SAM) recycling pathway from S-adenosyl-L-homocysteine (SAH) produced from SAM-dependent methylation reactions. May also be involved in the recycling of 5'-deoxyadenosine, whereupon the 5'-deoxyribose moiety of 5'-deoxyinosine is further metabolized to deoxyhexoses used for the biosynthesis of aromatic amino acids in methanogens. This Methanothermobacter thermautotrophicus (strain ATCC 29096 / DSM 1053 / JCM 10044 / NBRC 100330 / Delta H) (Methanobacterium thermoautotrophicum) protein is 5'-deoxyadenosine deaminase.